We begin with the raw amino-acid sequence, 130 residues long: Small ribosomal subunit protein uS9 (130 aa).

It belongs to the universal ribosomal protein uS9 family.

The chain is Small ribosomal subunit protein uS9 from Vibrio cholerae serotype O1 (strain ATCC 39541 / Classical Ogawa 395 / O395).